The chain runs to 206 residues: Guanylate kinase (206 aa).

In terms of domain architecture, Guanylate kinase-like spans 5–183; sequence GNLFVVAAPS…AVFDLKTIVH (179 aa). ATP is bound at residue 12-19; sequence APSGAGKS.

Belongs to the guanylate kinase family.

The protein resides in the cytoplasm. It carries out the reaction GMP + ATP = GDP + ADP. Its function is as follows. Essential for recycling GMP and indirectly, cGMP. The chain is Guanylate kinase from Polaromonas sp. (strain JS666 / ATCC BAA-500).